The following is a 137-amino-acid chain: Small ribosomal subunit protein bS6 (137 aa).

Residues serine 104–alanine 137 are disordered. Residues asparagine 111–alanine 137 are compositionally biased toward basic and acidic residues.

The protein belongs to the bacterial ribosomal protein bS6 family.

Binds together with bS18 to 16S ribosomal RNA. The polypeptide is Small ribosomal subunit protein bS6 (Helicobacter hepaticus (strain ATCC 51449 / 3B1)).